The primary structure comprises 305 residues: DNA-directed RNA polymerase 35 kDa subunit (305 aa).

This sequence belongs to the poxviridae DNA-directed RNA polymerase 35 kDa subunit family. In terms of assembly, the DNA-dependent RNA polymerase used for intermediate and late genes expression consists of eight subunits 147 kDa, 133 kDa, 35 kDa, 30 kDa, 22 kDa, 19 kDa, 18 kDa and 7 kDa totalling more than 500 kDa in mass. The same holoenzyme, with the addition of the transcription-specificity factor RAP94, is used for early gene expression.

The protein localises to the virion. It catalyses the reaction RNA(n) + a ribonucleoside 5'-triphosphate = RNA(n+1) + diphosphate. Part of the DNA-dependent RNA polymerase which catalyzes the transcription of viral DNA into RNA using the four ribonucleoside triphosphates as substrates. Responsible for the transcription of early, intermediate and late genes. DNA-dependent RNA polymerase associates with the early transcription factor (ETF) thereby allowing the early genes transcription. Late transcription, and probably also intermediate transcription, require newly synthesized RNA polymerase. This Rabbitpox virus (strain Utrecht) (RPV) protein is DNA-directed RNA polymerase 35 kDa subunit (RPO35).